The primary structure comprises 247 residues: Probable transcriptional regulatory protein BT_0627 (247 aa).

Belongs to the TACO1 family.

The protein resides in the cytoplasm. The polypeptide is Probable transcriptional regulatory protein BT_0627 (Bacteroides thetaiotaomicron (strain ATCC 29148 / DSM 2079 / JCM 5827 / CCUG 10774 / NCTC 10582 / VPI-5482 / E50)).